The sequence spans 126 residues: Holo-[acyl-carrier-protein] synthase (126 aa).

Mg(2+) contacts are provided by Asp9 and Glu58.

The protein belongs to the P-Pant transferase superfamily. AcpS family. Requires Mg(2+) as cofactor.

It is found in the cytoplasm. The enzyme catalyses apo-[ACP] + CoA = holo-[ACP] + adenosine 3',5'-bisphosphate + H(+). Functionally, transfers the 4'-phosphopantetheine moiety from coenzyme A to a Ser of acyl-carrier-protein. In Sodalis glossinidius (strain morsitans), this protein is Holo-[acyl-carrier-protein] synthase.